A 142-amino-acid polypeptide reads, in one-letter code: Gonadotropin subunit beta-2 (142 aa).

Positions 1 to 24 are cleaved as a signal peptide; that stretch reads MLGLHVGTLMISLFLCILLEPVEG. Intrachain disulfides connect cysteine 30–cysteine 78, cysteine 44–cysteine 93, cysteine 47–cysteine 131, cysteine 55–cysteine 109, cysteine 59–cysteine 111, and cysteine 114–cysteine 121. Asparagine 34 carries N-linked (GlcNAc...) asparagine glycosylation.

It belongs to the glycoprotein hormones subunit beta family. Heterodimer of an alpha and a beta chain.

It localises to the secreted. In terms of biological role, involved in gametogenesis and steroidogenesis. This is Gonadotropin subunit beta-2 (cgbb) from Coregonus autumnalis (Arctic cisco).